A 795-amino-acid polypeptide reads, in one-letter code: Putative replication origin-binding protein (795 aa).

The Helicase ATP-binding domain maps to 121–289; sequence WLSNDKIKTL…DNFGKSIVVN (169 aa). Residue 134 to 141 coordinates ATP; the sequence is SPMGTGKT.

It belongs to the mimivirus R1 family.

In terms of biological role, probably involved in DNA replication. May bind the genome origin of replication (ori). The chain is Putative replication origin-binding protein from Acanthamoeba polyphaga (Amoeba).